Consider the following 189-residue polypeptide: Large ribosomal subunit protein bL17 (189 aa).

Residues 136–189 are disordered; that stretch reads KAAPAAEEEVVETEEAPAVEAEAAESEEAPAAEAEAAEAEAAETEEAPAAEDKK. Over residues 141 to 189 the composition is skewed to acidic residues; sequence AEEEVVETEEAPAVEAEAAESEEAPAAEAEAAEAEAAETEEAPAAEDKK.

This sequence belongs to the bacterial ribosomal protein bL17 family. In terms of assembly, part of the 50S ribosomal subunit. Contacts protein L32.

The sequence is that of Large ribosomal subunit protein bL17 from Paenarthrobacter aurescens (strain TC1).